The primary structure comprises 384 residues: Spermidine/putrescine import ATP-binding protein PotA (384 aa).

An ABC transporter domain is found at 6–238; that stretch reads IAFQNVSKVF…PINHFVATFI (233 aa). An ATP-binding site is contributed by 40–47; that stretch reads GASGSGKS.

This sequence belongs to the ABC transporter superfamily. Spermidine/putrescine importer (TC 3.A.1.11.1) family. In terms of assembly, the complex is composed of two ATP-binding proteins (PotA), two transmembrane proteins (PotB and PotC) and a solute-binding protein (PotD).

Its subcellular location is the cell membrane. The enzyme catalyses ATP + H2O + polyamine-[polyamine-binding protein]Side 1 = ADP + phosphate + polyamineSide 2 + [polyamine-binding protein]Side 1.. Functionally, part of the ABC transporter complex PotABCD involved in spermidine/putrescine import. Responsible for energy coupling to the transport system. This Streptococcus thermophilus (strain ATCC BAA-250 / LMG 18311) protein is Spermidine/putrescine import ATP-binding protein PotA.